The primary structure comprises 27 residues: Ranatuerin-2Cb (27 aa).

Cys20 and Cys25 form a disulfide bridge.

As to expression, expressed by the skin glands.

Its subcellular location is the secreted. Its function is as follows. Antibacterial activity against Gram-positive bacterium S.aureus (MIC=40 uM) and Gram-negative bacterium E.coli (MIC=2 uM). Has activity against C.albicans (MIC=46 uM). The protein is Ranatuerin-2Cb of Lithobates clamitans (Green frog).